A 418-amino-acid chain; its full sequence is F-box protein At1g10780 (418 aa).

The 47-residue stretch at 1–47 folds into the F-box domain; the sequence is MDSLPDAILQYILSYLTSARDVAACNCVSKRWKESTDSVKSVVFHRN.

This chain is F-box protein At1g10780, found in Arabidopsis thaliana (Mouse-ear cress).